Reading from the N-terminus, the 129-residue chain is Holo-[acyl-carrier-protein] synthase (129 aa).

The Mg(2+) site is built by aspartate 8 and glutamate 58.

It belongs to the P-Pant transferase superfamily. AcpS family. Requires Mg(2+) as cofactor.

Its subcellular location is the cytoplasm. It carries out the reaction apo-[ACP] + CoA = holo-[ACP] + adenosine 3',5'-bisphosphate + H(+). Functionally, transfers the 4'-phosphopantetheine moiety from coenzyme A to a Ser of acyl-carrier-protein. In Acidithiobacillus ferrooxidans (strain ATCC 53993 / BNL-5-31) (Leptospirillum ferrooxidans (ATCC 53993)), this protein is Holo-[acyl-carrier-protein] synthase.